Reading from the N-terminus, the 109-residue chain is Nucleoid-associated protein NT01EI_1109 (109 aa).

A disordered region spans residues 89–109; sequence KERMASVSSGMQLPPGFKMPF.

Belongs to the YbaB/EbfC family. Homodimer.

The protein localises to the cytoplasm. It is found in the nucleoid. Binds to DNA and alters its conformation. May be involved in regulation of gene expression, nucleoid organization and DNA protection. This chain is Nucleoid-associated protein NT01EI_1109, found in Edwardsiella ictaluri (strain 93-146).